The sequence spans 299 residues: dTDP-4-dehydrorhamnose reductase (299 aa).

Residues 10–12 (GQV), Asp30, 39–40 (DF), and 63–65 (AHT) contribute to the NADH site. 11-12 (QV) contacts NADPH. NADPH is bound by residues 39–40 (DF), 63–65 (AHT), and Tyr102. 104-105 (TD) is a binding site for dTDP-beta-L-rhamnose. NADH-binding residues include Tyr128 and Lys132. The NADPH site is built by Tyr128 and Lys132. Residue Tyr128 is the Proton donor/acceptor of the active site. Trp153 lines the dTDP-beta-L-rhamnose pocket.

It belongs to the dTDP-4-dehydrorhamnose reductase family. As to quaternary structure, homodimer. Mg(2+) serves as cofactor.

It carries out the reaction dTDP-beta-L-rhamnose + NADP(+) = dTDP-4-dehydro-beta-L-rhamnose + NADPH + H(+). Its pathway is carbohydrate biosynthesis; dTDP-L-rhamnose biosynthesis. It functions in the pathway bacterial outer membrane biogenesis; LPS O-antigen biosynthesis. Its function is as follows. Involved in the biosynthesis of the dTDP-L-rhamnose which is an important component of lipopolysaccharide (LPS). Catalyzes the reduction of dTDP-6-deoxy-L-lyxo-4-hexulose to yield dTDP-L-rhamnose. RmlD uses NADH and NADPH nearly equally well. This chain is dTDP-4-dehydrorhamnose reductase, found in Shigella flexneri.